A 466-amino-acid chain; its full sequence is Asparagine--tRNA ligase (466 aa).

The protein belongs to the class-II aminoacyl-tRNA synthetase family. Homodimer.

It is found in the cytoplasm. It catalyses the reaction tRNA(Asn) + L-asparagine + ATP = L-asparaginyl-tRNA(Asn) + AMP + diphosphate + H(+). This is Asparagine--tRNA ligase from Shewanella denitrificans (strain OS217 / ATCC BAA-1090 / DSM 15013).